Consider the following 416-residue polypeptide: Serine hydroxymethyltransferase (416 aa).

(6S)-5,6,7,8-tetrahydrofolate is bound by residues leucine 118 and 122 to 124 (GHL). N6-(pyridoxal phosphate)lysine is present on lysine 227. (6S)-5,6,7,8-tetrahydrofolate contacts are provided by residues glutamate 242 and 350–352 (SPF).

It belongs to the SHMT family. Homodimer. Requires pyridoxal 5'-phosphate as cofactor.

The protein resides in the cytoplasm. It catalyses the reaction (6R)-5,10-methylene-5,6,7,8-tetrahydrofolate + glycine + H2O = (6S)-5,6,7,8-tetrahydrofolate + L-serine. It participates in one-carbon metabolism; tetrahydrofolate interconversion. It functions in the pathway amino-acid biosynthesis; glycine biosynthesis; glycine from L-serine: step 1/1. In terms of biological role, catalyzes the reversible interconversion of serine and glycine with tetrahydrofolate (THF) serving as the one-carbon carrier. This reaction serves as the major source of one-carbon groups required for the biosynthesis of purines, thymidylate, methionine, and other important biomolecules. Also exhibits THF-independent aldolase activity toward beta-hydroxyamino acids, producing glycine and aldehydes, via a retro-aldol mechanism. The protein is Serine hydroxymethyltransferase of Syntrophotalea carbinolica (strain DSM 2380 / NBRC 103641 / GraBd1) (Pelobacter carbinolicus).